The chain runs to 561 residues: Nephronectin (561 aa).

A signal peptide spans 1 to 19 (MAVLLAAVLASSLYLQVAA). Positions 52–87 (SWGQCQPVCQPQCKHGECVGPNKCKCHPGFAGKTCN) constitute an EGF-like 1 domain. 6 cysteine pairs are disulfide-bonded: cysteine 56/cysteine 69, cysteine 60/cysteine 75, cysteine 77/cysteine 86, cysteine 93/cysteine 104, cysteine 100/cysteine 113, and cysteine 115/cysteine 127. In terms of domain architecture, EGF-like 2; calcium-binding spans 89 to 128 (DLNECGLKPRPCKHRCMNTFGSYKCYCLNGYMLLPDGSCS). The EGF-like 3 domain occupies 132-168 (SCSMANCQYGCDVVKGQVRCQCPSPGLQLAPDGRTCV). The 45-residue stretch at 169–213 (DIDECATGRVSCPRFRQCVNTFGSYICKCHTGFDLMYIGGKYQCH) folds into the EGF-like 4; calcium-binding domain. Intrachain disulfides connect cysteine 173–cysteine 186, cysteine 180–cysteine 195, cysteine 197–cysteine 212, cysteine 218–cysteine 231, cysteine 225–cysteine 240, and cysteine 242–cysteine 253. An EGF-like 5; calcium-binding domain is found at 214–254 (DIDECSLGQHQCSSYARCYNIHGSYKCQCRDGYEGDGLNCV). The tract at residues 266–370 (PIHMPERNGT…TSTTTRVITV (105 aa)) is disordered. The span at 307-316 (TNRPTSKPTT) shows a compositional bias: low complexity. Positions 317-348 (RPTPNPTPQPTPPPPPPLPTEPRTTPLPPTPE) are enriched in pro residues. Residues 352 to 366 (TRPTTIAPATSTTTR) show a composition bias toward low complexity. Residues 382–384 (RGD) carry the Integrin interaction motif. The MAM domain occupies 420-561 (HSCNFDHGLC…DDVSLKRGRC (142 aa)).

Belongs to the nephronectin family. As to quaternary structure, homodimer and homotrimer. In terms of tissue distribution, expressed in kidney (at protein level).

It localises to the secreted. It is found in the extracellular space. The protein resides in the extracellular matrix. Its function is as follows. Functional ligand of integrin alpha-8/beta-1 in kidney development. Regulates the expression of GDNF with integrin alpha-8/beta-1 which is essential for kidney development. May also play a role in the development and function of various tissues, regulating cell adhesion, spreading and survival through the binding of several integrins. In Mus musculus (Mouse), this protein is Nephronectin (Npnt).